Reading from the N-terminus, the 125-residue chain is uncharacterized protein (125 aa).

Residues 7-29 (NCMFLYVYTDVCVRLCASIFYIM) form a helical membrane-spanning segment.

It localises to the membrane. This is an uncharacterized protein from Saccharomyces cerevisiae (strain ATCC 204508 / S288c) (Baker's yeast).